A 200-amino-acid chain; its full sequence is Probable nicotinate-nucleotide adenylyltransferase (200 aa).

Belongs to the NadD family.

The catalysed reaction is nicotinate beta-D-ribonucleotide + ATP + H(+) = deamido-NAD(+) + diphosphate. It participates in cofactor biosynthesis; NAD(+) biosynthesis; deamido-NAD(+) from nicotinate D-ribonucleotide: step 1/1. In terms of biological role, catalyzes the reversible adenylation of nicotinate mononucleotide (NaMN) to nicotinic acid adenine dinucleotide (NaAD). The chain is Probable nicotinate-nucleotide adenylyltransferase from Clostridium botulinum (strain Eklund 17B / Type B).